The primary structure comprises 315 residues: Probable diguanylate cyclase DgcF (315 aa).

4 helical membrane-spanning segments follow: residues 10–30 (FSTG…GVLP), 41–61 (IALI…SLAF), 80–100 (LLTF…VIDI), and 116–136 (LGIA…AAIN). A GGDEF domain is found at 173–310 (QHLTVMLLDI…GRNRTSTMRY (138 aa)). Residues aspartate 181 and isoleucine 182 each contribute to the Mg(2+) site. 3 residues coordinate substrate: asparagine 189, histidine 194, and aspartate 198. Glutamate 224 provides a ligand contact to Mg(2+).

As to quaternary structure, homodimer. Mg(2+) is required as a cofactor.

It is found in the cell membrane. The catalysed reaction is 2 GTP = 3',3'-c-di-GMP + 2 diphosphate. It functions in the pathway purine metabolism; 3',5'-cyclic di-GMP biosynthesis. Its function is as follows. Catalyzes the synthesis of cyclic-di-GMP (c-di-GMP) via the condensation of 2 GTP molecules. This Escherichia coli (strain K12) protein is Probable diguanylate cyclase DgcF.